The primary structure comprises 580 residues: MDDPDCDSTWEEESEEDGEDGQADDTTDEDTGDDDGDAEEARPSLFQSRMTGYRNWRAMQDMQRYRHNYPDLTDQDCNGDMCNLSFYKNEICFQPNGALIEDILQNWKDNYDLLEENHSYIQWLFPLREPGVNWHAKPLTLKEVEAFKSSKEVRERLVRAYELMLGFYGFHLEDRGTGAVCRAQNFQPRFHNLNSHSHNNLRITRILKSLGELGLEHYQAPLVRFFLEETLVQHKLPSVRQSALDYFLFAVRCRHQRRELVYFAWEHFKPRREFVWGPRDKLRRFKPQTIPQPLTGPGQADKDEGSRDPSQEAGTQGRTCGSGRDLSGDSGTAEDPSLLNTKPSDGGTLDGNQRDEAKSLSPKESKKRKLEGNRQEQVPGEADPQGVSEVEKIALNLEECALSPISQEPREAEPPCPVARVANEVRKRRKVEEGAEGDGVVSNTQMQASALPPTPSECPEAQKDGNGPEDSNSQVGAEDSKSQVGPEDPNSQVGLEDPNSQVGPEDPNSQVGPEDPNSQVGPEDPNSQVGPEDPNSQVVGPEQAASKSPVEDPDSDTMGTSVDESEELARIEASAEPPKP.

Met1 carries the N-acetylmethionine modification. The segment covering Met1–Ala38 has biased composition (acidic residues). Disordered stretches follow at residues Met1–Ser44 and Phe285–Val390. Positions Arg257–Lys286 match the Bipartite nuclear localization signal motif. The span at Ala300–Ser310 shows a compositional bias: basic and acidic residues. A phosphoserine mark is found at Ser327, Ser361, Ser365, and Ser403. Residues Asn352–Arg374 are compositionally biased toward basic and acidic residues. Residues Ile405 to Pro580 are disordered. Repeat copies occupy residues Gly467–Val475, Gly476–Val484, Gly485–Val493, Gly494–Val502, Gly503–Val511, Gly512–Val520, Gly521–Val529, and Gly530–Val538. An 8 X approximate tandem repeats region spans residues Gly467 to Val538. Residues Pro489 to Val538 are compositionally biased toward polar residues. Ser548 and Ser555 each carry phosphoserine.

The protein belongs to the opioid growth factor receptor family. Highly expressed in 6-day old cerebellum and brain. Lower expressed in adult cerebellum. The protein is detected in germinal cells of the cerebellum, in neurons of the deep cerebellar nuclei and in the glia in the medullary layer.

The protein localises to the cytoplasm. The protein resides in the perinuclear region. It localises to the nucleus. Its function is as follows. Receptor for opioid growth factor (OGF), also known as Met-enkephalin. Seems to be involved in growth regulation. In Rattus norvegicus (Rat), this protein is Opioid growth factor receptor (Ogfr).